The chain runs to 184 residues: GTP cyclohydrolase 1 (184 aa).

Zn(2+)-binding residues include Cys-75, His-78, and Cys-146.

The protein belongs to the GTP cyclohydrolase I family. In terms of assembly, toroid-shaped homodecamer, composed of two pentamers of five dimers.

It catalyses the reaction GTP + H2O = 7,8-dihydroneopterin 3'-triphosphate + formate + H(+). It functions in the pathway cofactor biosynthesis; 7,8-dihydroneopterin triphosphate biosynthesis; 7,8-dihydroneopterin triphosphate from GTP: step 1/1. The sequence is that of GTP cyclohydrolase 1 from Chromohalobacter salexigens (strain ATCC BAA-138 / DSM 3043 / CIP 106854 / NCIMB 13768 / 1H11).